A 70-amino-acid chain; its full sequence is MTTIRLKENEPFEVALRRFKRTIEKNGLLPELRAREFYEKPTAERKRKRDAAVKRNYKRLRSQMLPKKLY.

This sequence belongs to the bacterial ribosomal protein bS21 family.

This chain is Small ribosomal subunit protein bS21B, found in Cupriavidus metallidurans (strain ATCC 43123 / DSM 2839 / NBRC 102507 / CH34) (Ralstonia metallidurans).